We begin with the raw amino-acid sequence, 1093 residues long: Probable cellulose synthase A catalytic subunit 3 [UDP-forming] (1093 aa).

Residues 1-280 (MEASAGLVAG…PSSQINPYRM (280 aa)) are Cytoplasmic-facing. Zn(2+) is bound by residues Cys39, Cys42, Cys58, Cys61, Cys66, Cys69, Cys81, and Cys84. The RING-type; degenerate zinc-finger motif lies at 39–85 (CQICGDDVGLNPDGEPFVACNECAFPVCRDCYEYERREGTQNCPQCK). A compositionally biased stretch (basic and acidic residues) spans 233 to 246 (LHQMRNDGGGKDWD). The disordered stretch occupies residues 233-257 (LHQMRNDGGGKDWDGDGDDGDLPLM). A helical membrane pass occupies residues 281–301 (VIIIRLVVLGFFFHYRVMHPV). Residues 302–303 (PD) lie on the Extracellular side of the membrane. The helical transmembrane segment at 304-324 (AFALWLISVICEIWFAMSWIL) threads the bilayer. Residues 325-869 (DQFPKWFPIE…CLERFSYINS (545 aa)) are Cytoplasmic-facing. UDP-alpha-D-glucose contacts are provided by Ser363, Lys369, Glu370, and Asp399. Asp399 is an active-site residue. Residues 453-480 (VRERRAMKREYEEFKVRINALVAKAQKV) are a coiled coil. UDP-alpha-D-glucose is bound at residue Lys540. Residues Lys541 and Asp565 each contribute to the Mn(2+) site. Asp793 is a catalytic residue. The helical transmembrane segment at 870–890 (IVYPFTSIPLLAYCTLPAICL) threads the bilayer. Over 891–902 (LTGKFITPELTN) the chain is Extracellular. Residues 903 to 923 (VASLWFMSLFICIFATGILEM) form a helical membrane-spanning segment. Residues 924–939 (RWSGVGIDDWWRNEQF) are Cytoplasmic-facing. The chain crosses the membrane as a helical span at residues 940 to 960 (WVIGGVSSHLFALFQGLLKVI). The Extracellular segment spans residues 961-988 (AGIDTSFTVTSKGGDDEEFSELYTFKWT). The helical transmembrane segment at 989 to 1009 (TLLIPPTTLLLLNFIGVVAGV) threads the bilayer. Residues 1010–1020 (SNAINNGYESW) lie on the Cytoplasmic side of the membrane. The helical transmembrane segment at 1021 to 1041 (GPLFGKLFFAFWVIVHLYPFL) threads the bilayer. The Extracellular segment spans residues 1042-1050 (KGLVGRQNR). A helical membrane pass occupies residues 1051–1071 (TPTIVIVWSILLASIFSLLWV). Over 1072–1093 (RIDPFLAKNDGPLLEECGLDCN) the chain is Cytoplasmic.

Belongs to the glycosyltransferase 2 family. Plant cellulose synthase subfamily. Requires Mn(2+) as cofactor. Zn(2+) is required as a cofactor.

The protein localises to the cell membrane. The enzyme catalyses [(1-&gt;4)-beta-D-glucosyl](n) + UDP-alpha-D-glucose = [(1-&gt;4)-beta-D-glucosyl](n+1) + UDP + H(+). It participates in glycan metabolism; plant cellulose biosynthesis. In terms of biological role, probable catalytic subunit of cellulose synthase terminal complexes ('rosettes'), required for beta-1,4-glucan microfibril crystallization, a major mechanism of the cell wall formation. The protein is Probable cellulose synthase A catalytic subunit 3 [UDP-forming] (CESA3) of Oryza sativa subsp. japonica (Rice).